Consider the following 735-residue polypeptide: DNA replication licensing factor mcm5-A (735 aa).

The region spanning I332–M538 is the MCM domain. R372 provides a ligand contact to ADP. The Arginine finger signature appears at S513–D516.

The protein belongs to the MCM family. As to quaternary structure, component of the mcm2-7 complex (RLF-M). The complex forms a toroidal hexameric ring with the proposed subunit order mcm2-mcm6-mcm4-mcm7-mcm3-mcm5. The heterodimer of mmcm3/mcm5 interacts with mcm4, mmcm6, mcm7 and weakly with mcm2. Component of the CMG helicase complex, composed of the mcm2-7 complex, the GINS complex and cdc45.

It localises to the nucleus. The protein localises to the chromosome. The catalysed reaction is ATP + H2O = ADP + phosphate + H(+). Its function is as follows. Acts as a component of the MCM2-7 complex (MCM complex) which is the replicative helicase essential for 'once per cell cycle' DNA replication initiation and elongation in eukaryotic cells. Core component of CDC45-MCM-GINS (CMG) helicase, the molecular machine that unwinds template DNA during replication, and around which the replisome is built. The active ATPase sites in the MCM2-7 ring are formed through the interaction surfaces of two neighboring subunits such that a critical structure of a conserved arginine finger motif is provided in trans relative to the ATP-binding site of the Walker A box of the adjacent subunit. The six ATPase active sites, however, are likely to contribute differentially to the complex helicase activity. The polypeptide is DNA replication licensing factor mcm5-A (mcm5-a) (Xenopus laevis (African clawed frog)).